Consider the following 482-residue polypeptide: Protein trichome birefringence-like 15 (482 aa).

A helical; Signal-anchor for type II membrane protein transmembrane segment spans residues 109–129 (GSVSLSLIILILLVTTLLVSA). The GDS motif motif lies at 217 to 219 (GDS). The DCXHWCLPGXXDXWN motif signature appears at 461 to 475 (DCLHWCLPGIPDTWN).

This sequence belongs to the PC-esterase family. TBL subfamily.

It is found in the membrane. In terms of biological role, may act as a bridging protein that binds pectin and other cell wall polysaccharides. Probably involved in maintaining esterification of pectins. May be involved in the specific O-acetylation of cell wall polymers. This is Protein trichome birefringence-like 15 (TBL15) from Arabidopsis thaliana (Mouse-ear cress).